Consider the following 306-residue polypeptide: MSVSPVQPDPSVIGGVPKAPFVLKPNLARLFNDRASRFEALAQGSHLAPYLNFLAGITRIQSELVSALPPPEPVPADRVERARANAMPPIDRAAMGGSPDCREVLQQFFEKAEALEKPAAAAEALAQVRTADEEMLTWMIGNVMADDLPVESLAHHLYVAAAMQIQAARLAAGLDGSRLVPIRVGVCPACGGRPVASMVIGFHGAEGARYASCSCCATMWNEVRVKCLACGSTKGIGYQAVETGDEEATVKAEVCDTCNSWMKILYQNKNPSLDVVADDVASLGLDLLMKDTEYKRAGFDPFLMGY.

It belongs to the FdhE family.

It is found in the cytoplasm. Functionally, necessary for formate dehydrogenase activity. The chain is Protein FdhE homolog from Rhizobium meliloti (strain 1021) (Ensifer meliloti).